The sequence spans 540 residues: Putative laccase-11 (540 aa).

3 consecutive Plastocyanin-like domains span residues 1 to 114 (MATV…PPRG), 124 to 279 (REVP…YYGA), and 389 to 523 (NFPA…NDGP). Positions 48, 50, 93, and 95 each coordinate Cu cation. 7 residues coordinate Cu cation: His440, His443, His445, His502, Cys503, His504, and His508.

It belongs to the multicopper oxidase family. Cu cation serves as cofactor.

It is found in the secreted. The protein localises to the extracellular space. The protein resides in the apoplast. It carries out the reaction 4 hydroquinone + O2 = 4 benzosemiquinone + 2 H2O. In terms of biological role, lignin degradation and detoxification of lignin-derived products. This is Putative laccase-11 (LAC11) from Oryza sativa subsp. japonica (Rice).